We begin with the raw amino-acid sequence, 458 residues long: tRNA-2-methylthio-N(6)-dimethylallyladenosine synthase (458 aa).

The region spanning 2–118 is the MTTase N-terminal domain; it reads PKLYIKTYGC…VFEHVDGILR (117 aa). 6 residues coordinate [4Fe-4S] cluster: Cys-11, Cys-47, Cys-81, Cys-170, Cys-174, and Cys-177. Residues 156–389 form the Radical SAM core domain; it reads PGVRSTAYVS…LAVVNEIAIR (234 aa). One can recognise a TRAM domain in the interval 392–455; that stretch reads RDLVGTVQEV…GFTLYGVPCP (64 aa).

The protein belongs to the methylthiotransferase family. MiaB subfamily. As to quaternary structure, monomer. Requires [4Fe-4S] cluster as cofactor.

It is found in the cytoplasm. The catalysed reaction is N(6)-dimethylallyladenosine(37) in tRNA + (sulfur carrier)-SH + AH2 + 2 S-adenosyl-L-methionine = 2-methylsulfanyl-N(6)-dimethylallyladenosine(37) in tRNA + (sulfur carrier)-H + 5'-deoxyadenosine + L-methionine + A + S-adenosyl-L-homocysteine + 2 H(+). Its function is as follows. Catalyzes the methylthiolation of N6-(dimethylallyl)adenosine (i(6)A), leading to the formation of 2-methylthio-N6-(dimethylallyl)adenosine (ms(2)i(6)A) at position 37 in tRNAs that read codons beginning with uridine. The chain is tRNA-2-methylthio-N(6)-dimethylallyladenosine synthase from Akkermansia muciniphila (strain ATCC BAA-835 / DSM 22959 / JCM 33894 / BCRC 81048 / CCUG 64013 / CIP 107961 / Muc).